The primary structure comprises 160 residues: MSQLTHITERGEAHMVDASAKADTVREARASAYVTMARATLAMILDGQHHKGDVFATARIAGIQAAKRTWELIPLCHPLMLSKVEVQLTAETEQHWVRIDAVCRLTGKTGVEMEALTAASVAALTIYDMCKAVQKDMFIGPVRLLAKSGGKSGDFTGDEV.

Substrate contacts are provided by residues 75–77 (LCH) and 113–114 (ME). The active site involves Asp-128.

It belongs to the MoaC family. In terms of assembly, homohexamer; trimer of dimers.

It catalyses the reaction (8S)-3',8-cyclo-7,8-dihydroguanosine 5'-triphosphate = cyclic pyranopterin phosphate + diphosphate. The protein operates within cofactor biosynthesis; molybdopterin biosynthesis. Catalyzes the conversion of (8S)-3',8-cyclo-7,8-dihydroguanosine 5'-triphosphate to cyclic pyranopterin monophosphate (cPMP). The protein is Cyclic pyranopterin monophosphate synthase of Sodalis glossinidius (strain morsitans).